Here is a 1052-residue protein sequence, read N- to C-terminus: Ubiquitin-like modifier-activating enzyme 6 (1052 aa).

At Met-1 the chain carries N-acetylmethionine. The disordered stretch occupies residues 1 to 21 (MEGSEPVAAHQGEEASCSSWG). ATP is bound at residue Arg-46. Thr-54 is modified (phosphothreonine). Ser-301 is modified (phosphoserine). Residues Ala-470 and Asp-497 each coordinate ATP. The Mg(2+) site is built by Asp-499 and Glu-502. ATP-binding residues include Asn-505, Arg-508, Gln-509, and Lys-521. Lys-544 is modified (N6-acetyllysine). Val-545 contacts ATP. Asp-569 contributes to the Mg(2+) binding site. Asn-570 contributes to the ATP binding site. The active-site Glycyl thioester intermediate is Cys-625. Lys-729 carries the post-translational modification N6-acetyllysine. Position 737 is a phosphoserine (Ser-737).

It belongs to the ubiquitin-activating E1 family. Forms a thioester with UBD in cells stimulated with tumor necrosis factor-alpha (TNFa) and interferon-gamma (IFNg). Widely expressed. Isoform 2 is predominantly expressed in testis with higher expression in adult testis than in fetal testis.

It carries out the reaction ATP + ubiquitin + [E1 ubiquitin-activating enzyme]-L-cysteine = AMP + diphosphate + S-ubiquitinyl-[E1 ubiquitin-activating enzyme]-L-cysteine.. It participates in protein modification; protein ubiquitination. Activates ubiquitin by first adenylating its C-terminal glycine residue with ATP, and thereafter linking this residue to the side chain of a cysteine residue in E1, yielding a ubiquitin-E1 thioester and free AMP. Specific for ubiquitin, does not activate ubiquitin-like peptides. Also activates UBD/FAT10 conjugation via adenylation of its C-terminal glycine. Differs from UBE1 in its specificity for substrate E2 charging. Does not charge cell cycle E2s, such as CDC34. Essential for embryonic development. Isoform 2 may play a key role in ubiquitin system and may influence spermatogenesis and male fertility. The sequence is that of Ubiquitin-like modifier-activating enzyme 6 (UBA6) from Homo sapiens (Human).